A 570-amino-acid polypeptide reads, in one-letter code: Glutamate--tRNA ligase (570 aa).

The 'HIGH' region motif lies at P107–S117.

This sequence belongs to the class-I aminoacyl-tRNA synthetase family. Glutamate--tRNA ligase type 2 subfamily.

The protein localises to the cytoplasm. The enzyme catalyses tRNA(Glu) + L-glutamate + ATP = L-glutamyl-tRNA(Glu) + AMP + diphosphate. Functionally, catalyzes the attachment of glutamate to tRNA(Glu) in a two-step reaction: glutamate is first activated by ATP to form Glu-AMP and then transferred to the acceptor end of tRNA(Glu). In Pyrobaculum calidifontis (strain DSM 21063 / JCM 11548 / VA1), this protein is Glutamate--tRNA ligase.